Reading from the N-terminus, the 117-residue chain is Iron-sulfur cluster insertion protein ErpA (117 aa).

Iron-sulfur cluster-binding residues include Cys45, Cys109, and Cys111.

This sequence belongs to the HesB/IscA family. In terms of assembly, homodimer. Requires iron-sulfur cluster as cofactor.

Its function is as follows. Required for insertion of 4Fe-4S clusters for at least IspG. The chain is Iron-sulfur cluster insertion protein ErpA from Saccharophagus degradans (strain 2-40 / ATCC 43961 / DSM 17024).